A 156-amino-acid chain; its full sequence is Small ribosomal subunit protein uS7 (156 aa).

This sequence belongs to the universal ribosomal protein uS7 family. In terms of assembly, part of the 30S ribosomal subunit. Contacts proteins S9 and S11.

Functionally, one of the primary rRNA binding proteins, it binds directly to 16S rRNA where it nucleates assembly of the head domain of the 30S subunit. Is located at the subunit interface close to the decoding center, probably blocks exit of the E-site tRNA. This is Small ribosomal subunit protein uS7 from Mycobacteroides abscessus (strain ATCC 19977 / DSM 44196 / CCUG 20993 / CIP 104536 / JCM 13569 / NCTC 13031 / TMC 1543 / L948) (Mycobacterium abscessus).